We begin with the raw amino-acid sequence, 1088 residues long: Sterol regulatory element-binding protein 2 (1088 aa).

The transcriptional activation (acidic) stretch occupies residues 1–38 (METLTELGDELTLGDIDEMLQFVSNQVGEFPDLFEEQL). At 1–440 (METLTELGDE…TGLGMMDRSR (440 aa)) the chain is on the cytoplasmic side. The span at 59–70 (AAQQPYTTSAPQ) shows a compositional bias: polar residues. Positions 59-87 (AAQQPYTTSAPQPQLLPVKAPPQATPQRT) are disordered. One can recognise a bHLH domain in the interval 290–340 (ERRTTHNIIEKRYRSSINDKIMELKDLVMGTDAKMHKSGVLKKAIDYIKYL). The leucine-zipper stretch occupies residues 340–361 (LQQVNQKLRQENMALKLANQKN). The tract at residues 392-431 (SPPASDSGSPAVFSPYSVDSEPGSPLLDDEKVKDEPDSPT) is disordered. Residues 441–461 (MLLCTMTFLCLSFNPLTSLLH) traverse the membrane as a helical segment. Over 462-494 (PESGQYSERAVQHGTGRTMLGVEMSGFYGSWFD) the chain is Lumenal. The helical transmembrane segment at 495-515 (WLIPTIILWLVNGVIVLSVFM) threads the bilayer. Residues 516–1088 (KLLIHGEPVT…LSGGTAMAAS (573 aa)) are Cytoplasmic-facing.

The protein belongs to the SREBP family. As to quaternary structure, forms a tight complex with scap, the SCAP-SREBP complex, in the endoplasmic reticulum membrane. Homodimer; efficient DNA binding of the soluble transcription factor fragment requires dimerization with another bHLH protein. In terms of processing, processed in the Golgi apparatus, releasing the protein from the membrane. At low cholesterol the SCAP-SREBP complex is recruited into COPII vesicles for export from the endoplasmic reticulum. In the Golgi, complex SREBPs are cleaved sequentially by site-1 (MBTPS1, S1P) and site-2 (MBTPS2, S2P) proteases. The first cleavage by site-1 protease occurs within the luminal loop, the second cleavage by site-2 protease occurs within the first transmembrane domain, releasing the transcription factor from the Golgi membrane.

It is found in the endoplasmic reticulum membrane. It localises to the golgi apparatus membrane. The protein resides in the cytoplasmic vesicle. Its subcellular location is the COPII-coated vesicle membrane. The protein localises to the nucleus. Precursor of the transcription factor form (Processed sterol regulatory element-binding protein 2), which is embedded in the endoplasmic reticulum membrane. Low sterol concentrations promote processing of this form, releasing the transcription factor form that translocates into the nucleus and activates transcription of genes involved in cholesterol biosynthesis. Functionally, key transcription factor that regulates expression of genes involved in cholesterol biosynthesis. Binds to the sterol regulatory element 1 (SRE-1) (5'-ATCACCCCAC-3'). Has dual sequence specificity binding to both an E-box motif (5'-ATCACGTGA-3') and to SRE-1 (5'-ATCACCCCAC-3'). Regulates transcription of genes related to cholesterol synthesis pathway. The polypeptide is Sterol regulatory element-binding protein 2 (Xenopus laevis (African clawed frog)).